Consider the following 66-residue polypeptide: MAKGKDARVTIILECTSCVRNGVNKESTGISRYITQKNRHNTPSRLELRKFCPYCYKHTIHGEIKK.

It belongs to the bacterial ribosomal protein bL33 family.

The protein resides in the plastid. It localises to the chloroplast. This chain is Large ribosomal subunit protein bL33c, found in Carica papaya (Papaya).